The following is a 131-amino-acid chain: Metalloproteinase inhibitor (131 aa).

Positions 1–29 (MVRKRALGLAGSALTLVLGAVGFTAPAQA) are cleaved as a signal peptide. 2 disulfides stabilise this stretch: cysteine 33-cysteine 39 and cysteine 93-cysteine 98.

In terms of biological role, inhibits microbial metallo-proteinases, such as thermolysin, but not serine, thiol, or carboxyl proteinases. In Streptomyces nigrescens, this protein is Metalloproteinase inhibitor (smpI).